Reading from the N-terminus, the 390-residue chain is Chorismate synthase 1 (390 aa).

The NADP(+) site is built by R39 and R45. A disordered region spans residues 95–117; it reads EQEEKEMKRKVTKPRPGHADLNG. Residues 132-134, 253-254, G298, 313-317, and R339 contribute to the FMN site; these read RSS, NA, and KPIPT.

The protein belongs to the chorismate synthase family. In terms of assembly, homotetramer. Requires FMNH2 as cofactor.

It catalyses the reaction 5-O-(1-carboxyvinyl)-3-phosphoshikimate = chorismate + phosphate. Its pathway is metabolic intermediate biosynthesis; chorismate biosynthesis; chorismate from D-erythrose 4-phosphate and phosphoenolpyruvate: step 7/7. Catalyzes the anti-1,4-elimination of the C-3 phosphate and the C-6 proR hydrogen from 5-enolpyruvylshikimate-3-phosphate (EPSP) to yield chorismate, which is the branch point compound that serves as the starting substrate for the three terminal pathways of aromatic amino acid biosynthesis. This reaction introduces a second double bond into the aromatic ring system. This chain is Chorismate synthase 1, found in Bacillus thuringiensis (strain Al Hakam).